The primary structure comprises 72 residues: uncharacterized protein (72 aa).

It localises to the cytoplasm. The protein resides in the nucleus. This is an uncharacterized protein from Saccharomyces cerevisiae (strain ATCC 204508 / S288c) (Baker's yeast).